A 441-amino-acid chain; its full sequence is Interferon-related developmental regulator 2 (441 aa).

A compositionally biased stretch (basic residues) spans 1-15 (MPRARKGNTPRKGGQ). The disordered stretch occupies residues 1–72 (MPRARKGNTP…TVDEQGPQED (72 aa)). The span at 63 to 72 (TVDEQGPQED) shows a compositional bias: acidic residues.

This sequence belongs to the IFRD family. Associates with ribosomes; promoting ribosome inactivation.

Its function is as follows. Ribosome-binding protein that acts as an inhibitor of mRNA translation by promoting ribosome inactivation. Associates with the P- and E-sites of the ribosome and inserts a C-terminal helix into the mRNA exit channel to preclude translation. The polypeptide is Interferon-related developmental regulator 2 (Oryctolagus cuniculus (Rabbit)).